The sequence spans 337 residues: DNA-directed RNA polymerase subunit alpha (337 aa).

An alpha N-terminal domain (alpha-NTD) region spans residues 1–231 (MRNITISAYT…KQLSVFDKIT (231 aa)). The interval 248-337 (NTKLLQNITD…IAELKAQNEG (90 aa)) is alpha C-terminal domain (alpha-CTD).

The protein belongs to the RNA polymerase alpha chain family. In terms of assembly, homodimer. The RNAP catalytic core consists of 2 alpha, 1 beta, 1 beta' and 1 omega subunit. When a sigma factor is associated with the core the holoenzyme is formed, which can initiate transcription.

The enzyme catalyses RNA(n) + a ribonucleoside 5'-triphosphate = RNA(n+1) + diphosphate. In terms of biological role, DNA-dependent RNA polymerase catalyzes the transcription of DNA into RNA using the four ribonucleoside triphosphates as substrates. This chain is DNA-directed RNA polymerase subunit alpha, found in Campylobacter jejuni subsp. doylei (strain ATCC BAA-1458 / RM4099 / 269.97).